We begin with the raw amino-acid sequence, 469 residues long: Neuraminidase (469 aa).

At 1 to 9 (MNPNQKIIT) the chain is on the intravirion side. The helical transmembrane segment at 10–30 (IGSVSLTIATICFLMQIAILV) threads the bilayer. The tract at residues 11–33 (GSVSLTIATICFLMQIAILVTTV) is involved in apical transport and lipid raft association. Residues 31–469 (TTVTLHFKQY…DGADINLMPI (439 aa)) are Virion surface-facing. The tract at residues 36 to 88 (HFKQYECSSPPNNQVIPCQPTIIERNITEIVYLTNTTIEKEICPKLVEYRNWS) is hypervariable stalk region. Residues Asn61, Asn70, and Asn86 are each glycosylated (N-linked (GlcNAc...) asparagine; by host). Residues 91–469 (QCKITGFAPF…DGADINLMPI (379 aa)) are head of neuraminidase. 8 cysteine pairs are disulfide-bonded: Cys92-Cys417, Cys124-Cys129, Cys183-Cys230, Cys232-Cys237, Cys278-Cys291, Cys280-Cys289, Cys318-Cys337, and Cys421-Cys447. Arg118 provides a ligand contact to substrate. N-linked (GlcNAc...) asparagine; by host glycosylation occurs at Asn146. Residue Asp151 is the Proton donor/acceptor of the active site. A substrate-binding site is contributed by Arg152. 2 N-linked (GlcNAc...) asparagine; by host glycosylation sites follow: Asn200 and Asn234. 276–277 (EE) provides a ligand contact to substrate. Residue Arg292 participates in substrate binding. Ca(2+) contacts are provided by Asp293, Gly297, and Asp324. The interval 326–350 (PRKNDSSSSSYCQNPNNEKGSHGVK) is disordered. N-linked (GlcNAc...) asparagine; by host glycosylation occurs at Asn329. The segment covering 331–343 (SSSSSYCQNPNNE) has biased composition (polar residues). Arg371 is a substrate binding site. Asn402 is a glycosylation site (N-linked (GlcNAc...) asparagine; by host). Tyr406 functions as the Nucleophile in the catalytic mechanism.

It belongs to the glycosyl hydrolase 34 family. Homotetramer. Requires Ca(2+) as cofactor. N-glycosylated.

The protein localises to the virion membrane. It is found in the host apical cell membrane. The catalysed reaction is Hydrolysis of alpha-(2-&gt;3)-, alpha-(2-&gt;6)-, alpha-(2-&gt;8)- glycosidic linkages of terminal sialic acid residues in oligosaccharides, glycoproteins, glycolipids, colominic acid and synthetic substrates.. Its activity is regulated as follows. Inhibited by the neuraminidase inhibitors zanamivir (Relenza) and oseltamivir (Tamiflu). These drugs interfere with the release of progeny virus from infected cells and are effective against all influenza strains. Resistance to neuraminidase inhibitors is quite rare. Its function is as follows. Catalyzes the removal of terminal sialic acid residues from viral and cellular glycoconjugates. Cleaves off the terminal sialic acids on the glycosylated HA during virus budding to facilitate virus release. Additionally helps virus spread through the circulation by further removing sialic acids from the cell surface. These cleavages prevent self-aggregation and ensure the efficient spread of the progeny virus from cell to cell. Otherwise, infection would be limited to one round of replication. Described as a receptor-destroying enzyme because it cleaves a terminal sialic acid from the cellular receptors. May facilitate viral invasion of the upper airways by cleaving the sialic acid moieties on the mucin of the airway epithelial cells. Likely to plays a role in the budding process through its association with lipid rafts during intracellular transport. May additionally display a raft-association independent effect on budding. Plays a role in the determination of host range restriction on replication and virulence. Sialidase activity in late endosome/lysosome traffic seems to enhance virus replication. The chain is Neuraminidase from Influenza A virus (strain A/Kitakyushu/159/1993 H3N2).